Reading from the N-terminus, the 228-residue chain is 7-cyano-7-deazaguanine synthase (228 aa).

8-18 (LSGGLDSTTCL) provides a ligand contact to ATP. Zn(2+) is bound by residues Cys188, Cys198, Cys201, and Cys204.

This sequence belongs to the QueC family. It depends on Zn(2+) as a cofactor.

The enzyme catalyses 7-carboxy-7-deazaguanine + NH4(+) + ATP = 7-cyano-7-deazaguanine + ADP + phosphate + H2O + H(+). The protein operates within purine metabolism; 7-cyano-7-deazaguanine biosynthesis. In terms of biological role, catalyzes the ATP-dependent conversion of 7-carboxy-7-deazaguanine (CDG) to 7-cyano-7-deazaguanine (preQ(0)). The sequence is that of 7-cyano-7-deazaguanine synthase from Legionella pneumophila subsp. pneumophila (strain Philadelphia 1 / ATCC 33152 / DSM 7513).